The primary structure comprises 600 residues: Proton channel OTOP1 (600 aa).

A disordered region spans residues 1-50; sequence MPGDRGALSSPAASSGSPSAAPSGIAACPPPPSPLARASPQASGPRRGAS. The Cytoplasmic segment spans residues 1–56; sequence MPGDRGALSSPAASSGSPSAAPSGIAACPPPPSPLARASPQASGPRRGASVPQKLA. The segment covering 7–27 has biased composition (low complexity); the sequence is ALSSPAASSGSPSAAPSGIAA. A helical membrane pass occupies residues 57–78; sequence ETLSSQYGLNVFVAGLLFLLAW. Topologically, residues 79–86 are extracellular; it reads AVHATGVG. Residues 87 to 110 traverse the membrane as a helical segment; it reads KSDLLCVLTALMLLQLLWMLWYVG. Residues 111–128 lie on the Cytoplasmic side of the membrane; the sequence is RSYMQRRLIRPKDTHAGA. The helical transmembrane segment at 129–151 threads the bilayer; that stretch reads RWLRGSITLFAFITIVLGCLKVA. The Extracellular portion of the chain corresponds to 152–161; it reads YFIGFSECLS. Residues 162-186 form a helical membrane-spanning segment; that stretch reads ATEGVFPVTHAVHTLLQVYFLWGHA. Residues 187–194 are Cytoplasmic-facing; sequence KDIIMSFK. Residues 195–221 form a helical membrane-spanning segment; the sequence is TLERFGVIHSVFTNLLLWANSVLNESK. Residues 222 to 262 are Extracellular-facing; sequence HQLNEHKERLITLGFGNITIVLDDHTPQCNCTPPALCSALS. Residues 263 to 288 traverse the membrane as a helical segment; sequence HGIYYLYPFNIEYQILASTMLYVLWK. Topologically, residues 289 to 309 are cytoplasmic; it reads NIGRRVDSSRHQKMQCRFDGV. A helical membrane pass occupies residues 310 to 332; sequence LVGSVLGLTVLAATIAVVVVYMI. Residues 333–342 are Extracellular-facing; the sequence is HIGRSKSKSE. The chain crosses the membrane as a helical span at residues 343 to 368; sequence SALIMFYLYAITVLLLMGAAGLVGSW. Over 369-386 the chain is Cytoplasmic; the sequence is IYRVDEKSLDESKNPARK. The chain crosses the membrane as a helical span at residues 387–411; it reads LDADLLVATASGSWLLSWGSILAIA. Topologically, residues 412–421 are extracellular; sequence CAETRPPYTW. The helical transmembrane segment at 422-442 threads the bilayer; the sequence is YNLPYSVLVIVEKYVQNIFII. Over 443–532 the chain is Cytoplasmic; the sequence is ESVHLEPEGV…QGGMKRRLLR (90 aa). The helical transmembrane segment at 533 to 551 threads the bilayer; it reads NITAFLFLCNISLWIPPAF. At 552 to 569 the chain is on the extracellular side; the sequence is GCRPEYDNGLEEIVFGFE. A helical membrane pass occupies residues 570-593; that stretch reads PWIIVVNLAMPFSIFYRMHAAAAL. Residues 594-600 are Cytoplasmic-facing; it reads FEVYCKI.

Belongs to the otopetrin family. As to quaternary structure, homodimer. Interacts with STAT1, independently of STAT1 phosphorylation status.

It localises to the cell membrane. It is found in the cell projection. Its subcellular location is the microvillus. The enzyme catalyses H(+)(in) = H(+)(out). With respect to regulation, activated by both acid and alkali, with proton influx in response to extracellular acid and proton efflux during alkali stimulation. Inhibited by Zn(2+); this inhibition is thought to be pH-sensitive. Currents evoked in response to mild acid (pH 6.0) stimulus may also be mildly potentiated by exposure to Zn(2+). Activated by NH(4)Cl. Its function is as follows. Proton-selective ion channel. Biphasically modulated by acid and alkali, mediating proton influx and efflux in response to extracellular acid and base stimulation, respectively. Sour taste receptor, which carries inward currents in response to extracellular acidification. Sensor for ammonium chloride (NH(4)Cl) in taste receptor cells. NH(4)Cl acts by increasing the intracellular pH, thereby generating a driving force for proton entry through OTOP1 channel. Might also participate in alkaline sensation. Plays a role in the regulation of Ca(2+) flux in response to purigenic (ATP, ADP and UDP) stimuli, leading to increase in cytosolic Ca(2+) due to influx of extracellular calcium. May play this role by inhibiting P2Y purinoceptor-mediated Ca(2+) release in a Ca(2+)-dependent manner and promote an influx of Ca(2+) in response to ATP. Through this mechanism and possibly others, plays a role in the formation and function of calcium carbonate-based structures in the vestibular system of the inner ear, called otoconia, that sense gravity and linear acceleration. In obesity, may attenuate adipose tissue inflammation, through the negative regulation of IFNG signaling, hence may play an adaptive role in the maintainance of metabolic homeostasis. Following alkali activation, may also be permeable Na(+), K(+), Cs(+) and Li(+). This is Proton channel OTOP1 from Rattus norvegicus (Rat).